The sequence spans 562 residues: Septation ring formation regulator EzrA (562 aa).

Residues 1 to 2 are Extracellular-facing; sequence ME. The chain crosses the membrane as a helical span at residues 3-21; it reads FVIGLLIVLLALFAAGYFF. At 22–562 the chain is on the cytoplasmic side; that stretch reads RKKIYAEIDR…VEKIKADISA (541 aa). Coiled coils occupy residues 377 to 425 and 470 to 497; these read YSLL…LKKT and MEEAGAHLKQAEDIVNRASRESEELVEQ.

It belongs to the EzrA family. May be degraded by FtsH protease.

It localises to the cell membrane. It is found in the membrane raft. Functionally, negative regulator of FtsZ ring formation; modulates the frequency and position of FtsZ ring formation. Inhibits FtsZ ring formation at polar sites. Interacts either with FtsZ or with one of its binding partners to promote depolymerization. The protein is Septation ring formation regulator EzrA of Bacillus subtilis (strain 168).